The sequence spans 592 residues: Threonine--tRNA ligase (592 aa).

The segment at 193-488 is catalytic; that stretch reads DHRKLGPALG…LIEHYGGAFP (296 aa). The Zn(2+) site is built by cysteine 284, histidine 335, and histidine 465.

Belongs to the class-II aminoacyl-tRNA synthetase family. As to quaternary structure, homodimer. It depends on Zn(2+) as a cofactor.

The protein localises to the cytoplasm. The catalysed reaction is tRNA(Thr) + L-threonine + ATP = L-threonyl-tRNA(Thr) + AMP + diphosphate + H(+). Catalyzes the attachment of threonine to tRNA(Thr) in a two-step reaction: L-threonine is first activated by ATP to form Thr-AMP and then transferred to the acceptor end of tRNA(Thr). Also edits incorrectly charged L-seryl-tRNA(Thr). This Treponema pallidum (strain Nichols) protein is Threonine--tRNA ligase.